The following is a 605-amino-acid chain: Elongation factor 4 (605 aa).

Positions 11–193 (KRIRNFSIIA…RIVTQISPPK (183 aa)) constitute a tr-type G domain. GTP is bound by residues 23–28 (DHGKST) and 140–143 (NKVD).

It belongs to the TRAFAC class translation factor GTPase superfamily. Classic translation factor GTPase family. LepA subfamily.

The protein resides in the cell membrane. It catalyses the reaction GTP + H2O = GDP + phosphate + H(+). Required for accurate and efficient protein synthesis under certain stress conditions. May act as a fidelity factor of the translation reaction, by catalyzing a one-codon backward translocation of tRNAs on improperly translocated ribosomes. Back-translocation proceeds from a post-translocation (POST) complex to a pre-translocation (PRE) complex, thus giving elongation factor G a second chance to translocate the tRNAs correctly. Binds to ribosomes in a GTP-dependent manner. The chain is Elongation factor 4 from Phytoplasma australiense.